A 394-amino-acid polypeptide reads, in one-letter code: Anthocyanidin 3-O-glucosyltransferase 6 (394 aa).

D37 acts as the Charge relay in catalysis. 8 residues coordinate UDP-alpha-D-glucose: T59, A267, Q269, H284, W287, N288, S289, and E292. Residue A307 coordinates an anthocyanidin. Positions 308 and 309 each coordinate UDP-alpha-D-glucose.

Belongs to the UDP-glycosyltransferase family. As to expression, expressed in cotyledons and leaves.

The enzyme catalyses an anthocyanidin + UDP-alpha-D-glucose + H(+) = an anthocyanidin 3-O-beta-D-glucoside + UDP. Its pathway is pigment biosynthesis; anthocyanin biosynthesis. Functionally, in the presence of other necessary color factors, this glycosylation reaction allows the accumulation of anthocyanin pigments. May be involved in glycosylation of unstable cyanohydrins to produce stable cyanoglucosides. The chain is Anthocyanidin 3-O-glucosyltransferase 6 (GT6) from Manihot esculenta (Cassava).